Reading from the N-terminus, the 336-residue chain is Holliday junction branch migration complex subunit RuvB (336 aa).

Residues 1 to 11 (MDDDKLLSGDK) show a composition bias toward basic and acidic residues. The tract at residues 1-21 (MDDDKLLSGDKADDEEASLEK) is disordered. A large ATPase domain (RuvB-L) region spans residues 1-184 (MDDDKLLSGD…FGIVEHMAYY (184 aa)). ATP contacts are provided by residues leucine 23, arginine 24, glycine 65, lysine 68, threonine 69, threonine 70, 131–133 (EDF), arginine 174, tyrosine 184, and arginine 221. Threonine 69 is a Mg(2+) binding site. The segment at 185 to 255 (EVADLEDIVK…IVARSLTYLR (71 aa)) is small ATPAse domain (RuvB-S). Positions 258-336 (DAGLDETDNK…HLGFPYPENK (79 aa)) are head domain (RuvB-H). Residues arginine 313 and arginine 318 each contribute to the DNA site.

This sequence belongs to the RuvB family. In terms of assembly, homohexamer. Forms an RuvA(8)-RuvB(12)-Holliday junction (HJ) complex. HJ DNA is sandwiched between 2 RuvA tetramers; dsDNA enters through RuvA and exits via RuvB. An RuvB hexamer assembles on each DNA strand where it exits the tetramer. Each RuvB hexamer is contacted by two RuvA subunits (via domain III) on 2 adjacent RuvB subunits; this complex drives branch migration. In the full resolvosome a probable DNA-RuvA(4)-RuvB(12)-RuvC(2) complex forms which resolves the HJ.

The protein localises to the cytoplasm. The enzyme catalyses ATP + H2O = ADP + phosphate + H(+). In terms of biological role, the RuvA-RuvB-RuvC complex processes Holliday junction (HJ) DNA during genetic recombination and DNA repair, while the RuvA-RuvB complex plays an important role in the rescue of blocked DNA replication forks via replication fork reversal (RFR). RuvA specifically binds to HJ cruciform DNA, conferring on it an open structure. The RuvB hexamer acts as an ATP-dependent pump, pulling dsDNA into and through the RuvAB complex. RuvB forms 2 homohexamers on either side of HJ DNA bound by 1 or 2 RuvA tetramers; 4 subunits per hexamer contact DNA at a time. Coordinated motions by a converter formed by DNA-disengaged RuvB subunits stimulates ATP hydrolysis and nucleotide exchange. Immobilization of the converter enables RuvB to convert the ATP-contained energy into a lever motion, pulling 2 nucleotides of DNA out of the RuvA tetramer per ATP hydrolyzed, thus driving DNA branch migration. The RuvB motors rotate together with the DNA substrate, which together with the progressing nucleotide cycle form the mechanistic basis for DNA recombination by continuous HJ branch migration. Branch migration allows RuvC to scan DNA until it finds its consensus sequence, where it cleaves and resolves cruciform DNA. The polypeptide is Holliday junction branch migration complex subunit RuvB (Lactiplantibacillus plantarum (strain ATCC BAA-793 / NCIMB 8826 / WCFS1) (Lactobacillus plantarum)).